The primary structure comprises 231 residues: Small ribosomal subunit protein bS18c (231 aa).

Disordered regions lie at residues 1–31 and 95–231; these read MEKSERPLIKKKRPFRKKKRSFRKRRSPIES and QKEE…TRKK. The span at 9–26 shows a compositional bias: basic residues; it reads IKKKRPFRKKKRSFRKRR. Basic and acidic residues-rich tracts occupy residues 95-151, 159-169, and 212-231; these read QKEE…EFQR, TNEKQTNEKQT, and TNEKQTKSNDRTTDLRTRKK.

Belongs to the bacterial ribosomal protein bS18 family. Part of the 30S ribosomal subunit.

The protein resides in the plastid. It is found in the chloroplast. The sequence is that of Small ribosomal subunit protein bS18c from Jasminum nudiflorum (Winter jasmine).